The primary structure comprises 471 residues: Heat shock 70 kDa protein 13 (471 aa).

Positions 1-22 (MAGEMTILGSAVLTLLLAGYLA) are cleaved as a signal peptide. A glycan (N-linked (GlcNAc...) asparagine) is linked at Asn-184. The tract at residues 316-339 (NDSQKPQNADSKLPEDQLTPGDGH) is disordered.

Belongs to the heat shock protein 70 family. Binds UBQLN2.

The protein resides in the microsome. Its subcellular location is the endoplasmic reticulum. In terms of biological role, has peptide-independent ATPase activity. The chain is Heat shock 70 kDa protein 13 (Hspa13) from Rattus norvegicus (Rat).